The chain runs to 384 residues: Glutamate 5-kinase (384 aa).

ATP is bound at residue Lys24. Positions 64, 149, and 161 each coordinate substrate. ATP contacts are provided by residues 181 to 182 and 223 to 229; these read TD and TGGMRTK. One can recognise a PUA domain in the interval 288–370; sequence PGAILIDAGA…RDIQTLLGYT (83 aa).

The protein belongs to the glutamate 5-kinase family.

The protein localises to the cytoplasm. The catalysed reaction is L-glutamate + ATP = L-glutamyl 5-phosphate + ADP. Its pathway is amino-acid biosynthesis; L-proline biosynthesis; L-glutamate 5-semialdehyde from L-glutamate: step 1/2. Catalyzes the transfer of a phosphate group to glutamate to form L-glutamate 5-phosphate. The sequence is that of Glutamate 5-kinase from Xylella fastidiosa (strain M23).